The following is a 166-amino-acid chain: Telethonin (166 aa).

Serine 39 is modified (phosphoserine). The segment at 145 to 166 is disordered; it reads VSKPGTLRRSLSRSMSQEAQRG. Over residues 156–166 the composition is skewed to polar residues; it reads SRSMSQEAQRG.

Interacts with MYOZ1, MYOZ2 and MYOZ3. Interacts with CSRP3. Interacts directly with the N-terminal Ig-like domains of 2 titin (TTN) molecules. Interacts with ANKRD2; the interaction is direct.

The protein localises to the cytoplasm. It is found in the myofibril. The protein resides in the sarcomere. Functionally, muscle assembly regulating factor. Mediates the antiparallel assembly of titin (TTN) molecules at the sarcomeric Z-disk. In Bos taurus (Bovine), this protein is Telethonin (TCAP).